The primary structure comprises 186 residues: MKFLFDLFPVILFFAAFKVAGIYVATTVAMVATVAQIAWVWFKHRKVDAMQWLSLLIIVVFGGATLIFHNDTFIKWKPTVLYWMFGVVLLGSAVLLRKNLIRAMMEQQVSLPEPMWGRLNLVWSLFFLAMGGLNLYVAYHFDTDVWVNFKLFGSMGLMVVFILVQSVWLARHMQERPAGANPQDDR.

6 helical membrane-spanning segments follow: residues 3-23 (FLFD…AGIY), 24-44 (VATT…WFKH), 49-69 (AMQW…LIFH), 76-96 (WKPT…AVLL), 121-141 (LVWS…AYHF), and 149-169 (FKLF…SVWL).

This sequence belongs to the YciB family.

It localises to the cell inner membrane. In terms of biological role, plays a role in cell envelope biogenesis, maintenance of cell envelope integrity and membrane homeostasis. The sequence is that of Inner membrane-spanning protein YciB from Ralstonia nicotianae (strain ATCC BAA-1114 / GMI1000) (Ralstonia solanacearum).